Here is a 448-residue protein sequence, read N- to C-terminus: Glutamyl-tRNA reductase (448 aa).

Residues 49 to 52 (TCNR), S109, 114 to 116 (ETQ), and Q120 contribute to the substrate site. C50 serves as the catalytic Nucleophile. Residue 189 to 194 (GAGEMG) participates in NADP(+) binding.

The protein belongs to the glutamyl-tRNA reductase family. Homodimer.

The catalysed reaction is (S)-4-amino-5-oxopentanoate + tRNA(Glu) + NADP(+) = L-glutamyl-tRNA(Glu) + NADPH + H(+). Its pathway is porphyrin-containing compound metabolism; protoporphyrin-IX biosynthesis; 5-aminolevulinate from L-glutamyl-tRNA(Glu): step 1/2. Its function is as follows. Catalyzes the NADPH-dependent reduction of glutamyl-tRNA(Glu) to glutamate 1-semialdehyde (GSA). The chain is Glutamyl-tRNA reductase from Staphylococcus epidermidis (strain ATCC 12228 / FDA PCI 1200).